Reading from the N-terminus, the 439-residue chain is uncharacterized protein (439 aa).

A compositionally biased stretch (low complexity) spans 268–284; sequence QQQQQQQPQHNNNNTQV. A disordered region spans residues 268–439; it reads QQQQQQQPQH…RTRFTTTNLH (172 aa). Positions 285-328 are enriched in pro residues; sequence QPPPPSQQLPPPPKPQPQLPKPQPQKPQPQLPKPPQQPKPPQEP. The segment covering 350-439 has biased composition (low complexity); sequence QEQQQQPPQE…RTRFTTTNLH (90 aa).

This is an uncharacterized protein from Dictyostelium discoideum (Social amoeba).